A 165-amino-acid chain; its full sequence is Peptide deformylase (165 aa).

The Fe cation site is built by Cys-93 and His-135. Glu-136 is a catalytic residue. Residue His-139 participates in Fe cation binding.

It belongs to the polypeptide deformylase family. The cofactor is Fe(2+).

The catalysed reaction is N-terminal N-formyl-L-methionyl-[peptide] + H2O = N-terminal L-methionyl-[peptide] + formate. Removes the formyl group from the N-terminal Met of newly synthesized proteins. Requires at least a dipeptide for an efficient rate of reaction. N-terminal L-methionine is a prerequisite for activity but the enzyme has broad specificity at other positions. This is Peptide deformylase from Thermodesulfovibrio yellowstonii (strain ATCC 51303 / DSM 11347 / YP87).